A 592-amino-acid polypeptide reads, in one-letter code: Aspartate--tRNA ligase (592 aa).

Glu173 serves as a coordination point for L-aspartate. Residues 197–200 (QLFK) form an aspartate region. Residue Arg219 coordinates L-aspartate. Residues 219-221 (RDE) and Gln228 contribute to the ATP site. Residue His448 participates in L-aspartate binding. Glu482 contacts ATP. Arg489 serves as a coordination point for L-aspartate. Position 534–537 (534–537 (GLDR)) interacts with ATP.

The protein belongs to the class-II aminoacyl-tRNA synthetase family. Type 1 subfamily. As to quaternary structure, homodimer.

It is found in the cytoplasm. The enzyme catalyses tRNA(Asp) + L-aspartate + ATP = L-aspartyl-tRNA(Asp) + AMP + diphosphate. Catalyzes the attachment of L-aspartate to tRNA(Asp) in a two-step reaction: L-aspartate is first activated by ATP to form Asp-AMP and then transferred to the acceptor end of tRNA(Asp). This chain is Aspartate--tRNA ligase, found in Shewanella baltica (strain OS223).